Consider the following 275-residue polypeptide: Formamidopyrimidine-DNA glycosylase (275 aa).

The active-site Schiff-base intermediate with DNA is Pro-2. The active-site Proton donor is Glu-3. The active-site Proton donor; for beta-elimination activity is the Lys-58. Positions 93, 111, and 156 each coordinate DNA. The FPG-type zinc-finger motif lies at 241 to 275 (FVYDRAGLPCRVCGTPIRQIVQGQRSTYFCPTCQR). The Proton donor; for delta-elimination activity role is filled by Arg-265.

Belongs to the FPG family. In terms of assembly, monomer. The cofactor is Zn(2+).

It catalyses the reaction Hydrolysis of DNA containing ring-opened 7-methylguanine residues, releasing 2,6-diamino-4-hydroxy-5-(N-methyl)formamidopyrimidine.. The enzyme catalyses 2'-deoxyribonucleotide-(2'-deoxyribose 5'-phosphate)-2'-deoxyribonucleotide-DNA = a 3'-end 2'-deoxyribonucleotide-(2,3-dehydro-2,3-deoxyribose 5'-phosphate)-DNA + a 5'-end 5'-phospho-2'-deoxyribonucleoside-DNA + H(+). In terms of biological role, involved in base excision repair of DNA damaged by oxidation or by mutagenic agents. Acts as a DNA glycosylase that recognizes and removes damaged bases. Has a preference for oxidized purines, such as 7,8-dihydro-8-oxoguanine (8-oxoG). Has AP (apurinic/apyrimidinic) lyase activity and introduces nicks in the DNA strand. Cleaves the DNA backbone by beta-delta elimination to generate a single-strand break at the site of the removed base with both 3'- and 5'-phosphates. The polypeptide is Formamidopyrimidine-DNA glycosylase (Burkholderia ambifaria (strain MC40-6)).